Here is a 970-residue protein sequence, read N- to C-terminus: Testis anion transporter 1 (970 aa).

Over 1–95 the chain is Cytoplasmic; that stretch reads MAQLERSAIS…YRLKDWLLGD (95 aa). A helical membrane pass occupies residues 96–116; the sequence is LLAGISVGLVQVPQGLTLSLL. Residues 117-119 are Extracellular-facing; that stretch reads ARQ. The chain crosses the membrane as a helical span at residues 120–140; the sequence is LIPPLNIAYAAFCSSVIYVIF. The Cytoplasmic portion of the chain corresponds to 141–146; it reads GSCHQM. Residues 147 to 167 form a helical membrane-spanning segment; it reads SIGSFFLVSALLINVLKVSPF. Residues 168–202 are Extracellular-facing; the sequence is NNGQLVMGSFVKNEFSAPSYLMGYNKSLSVVATTT. Asn192 carries N-linked (GlcNAc...) asparagine glycosylation. A helical transmembrane segment spans residues 203 to 223; sequence FLTGIIQLIMGVLGLGFIATY. Residues 224 to 232 are Cytoplasmic-facing; that stretch reads LPESAMSAY. The chain crosses the membrane as a helical span at residues 233-253; sequence LAAVALHIMLSQLTFIFGIMI. Residues 254-270 lie on the Extracellular side of the membrane; the sequence is SFHAGPISFFYDIINYC. A helical transmembrane segment spans residues 271–291; sequence VALPKANSTSILVFLTVVVAL. Residues 292 to 307 are Cytoplasmic-facing; sequence RINKCIRISFNQYPIE. The chain crosses the membrane as a helical span at residues 308-328; the sequence is FPMELFLIIGFTVIANKISMA. The Extracellular portion of the chain corresponds to 329 to 355; sequence TETSQTLIDMIPYSFLLPVTPDFSLLP. The helical transmembrane segment at 356–376 threads the bilayer; the sequence is KIILQAFSLSLVSSFLLIFLG. Over 377–392 the chain is Cytoplasmic; the sequence is KKIASLHNYSVNSNQD. Residues 393 to 413 form a helical membrane-spanning segment; it reads LIAIGLCNVVSSFFRSCVFTG. Residues 414 to 429 lie on the Extracellular side of the membrane; the sequence is AIARTIIQDKSGGRQQ. The helical transmembrane segment at 430–450 threads the bilayer; sequence FASLVGAGVMLLLMVKMGHFF. At 451–452 the chain is on the cytoplasmic side; sequence YT. The chain crosses the membrane as a helical span at residues 453–473; that stretch reads LPNAVLAGIILSNVIPYLETI. Topologically, residues 474–497 are extracellular; it reads SNLPSLWRQDQYDCALWMMTFSSS. A helical transmembrane segment spans residues 498 to 518; it reads IFLGLDIGLIISVVSAFFITT. The Cytoplasmic portion of the chain corresponds to 519 to 970; it reads VRSHRAKILL…SPEGNSNEDV (452 aa). The region spanning 543–795 is the STAS domain; the sequence is DYREIITIPG…LSVHDAVLFA (253 aa). The interval 664–970 is interaction with RACGAP1; that stretch reads TVSSVSQKNQ…SPEGNSNEDV (307 aa). The span at 858–868 shows a compositional bias: acidic residues; that stretch reads SELDLELESEQ. A disordered region spans residues 858–970; sequence SELDLELESE…SPEGNSNEDV (113 aa). Positions 877–898 are enriched in basic and acidic residues; it reads DLDRELEPEMEPKAETETKTQT. Over residues 938–948 the composition is skewed to low complexity; the sequence is STQSQTQTRTW.

The protein belongs to the SLC26A/SulP transporter (TC 2.A.53) family. As to quaternary structure, interacts with RACGAP1. Interacts with CFTR; stimulates anion transport activity of CFTR. N-glycosylated. As to expression, expression observed exclusively in testis, restricted to the meiotic phase of the germ cell. Abundant expression located in the seminiferous tubules, concentrated on the luminal side of the tubuli harboring the spermatocytes and spermatids.

The protein localises to the membrane. It catalyses the reaction sulfate(out) + chloride(in) = sulfate(in) + chloride(out). It carries out the reaction oxalate(in) + chloride(out) = oxalate(out) + chloride(in). Activity is inhibited by 4,4'-Di-isothiocyanatostilbene-2,2'-disulfonic acid (DIDS - an inhibitor of several anion channels and transporters) and gluconate. Antiporter that mediates the exchange of sulfate and oxalate against chloride ions across a membrane. Stimulates anion transport activity of CFTR. May cooperate with CFTR in the regulation of chloride and bicarbonate ions fluxes required for activation of the ADCY10/PKA pathway during sperm motility and sperm capacitation. May play a role in sperm tail differentiation and motility and hence male fertility. The protein is Testis anion transporter 1 of Homo sapiens (Human).